Reading from the N-terminus, the 154-residue chain is Transcriptional repressor NrdR (154 aa).

A zinc finger lies at C3–C34. One can recognise an ATP-cone domain in the interval V48–E138.

The protein belongs to the NrdR family. Zn(2+) serves as cofactor.

Its function is as follows. Negatively regulates transcription of bacterial ribonucleotide reductase nrd genes and operons by binding to NrdR-boxes. In Chlamydia trachomatis serovar L2 (strain ATCC VR-902B / DSM 19102 / 434/Bu), this protein is Transcriptional repressor NrdR.